The primary structure comprises 465 residues: E3 ubiquitin-protein ligase ORTHRUS-LIKE 1 (465 aa).

Residues 31–69 (TSLSSPLDRSGDVDPLPVSDESGGSKADESMTDADETKK) form a disordered region. Residues 109–148 (CSLCNQLPDRPVTILCGHNFCLKCFDKWIDQGNQICATCR) form an RING-type zinc finger. Positions 233 to 374 (VRNQGVLVGE…FKVCRYLFVR (142 aa)) constitute a YDG domain. The chain crosses the membrane as a helical span at residues 442-462 (MAMTCLLLFVLIILVGSSSIL).

The protein localises to the nucleus. It localises to the membrane. It carries out the reaction S-ubiquitinyl-[E2 ubiquitin-conjugating enzyme]-L-cysteine + [acceptor protein]-L-lysine = [E2 ubiquitin-conjugating enzyme]-L-cysteine + N(6)-ubiquitinyl-[acceptor protein]-L-lysine.. Its pathway is protein modification; protein ubiquitination. In terms of biological role, E3 ubiquitin-protein ligase. May participate in methylation-dependent transcriptional regulation. Mediates ubiquitination with the E2 ubiquitin-conjugating enzyme UBC11. The chain is E3 ubiquitin-protein ligase ORTHRUS-LIKE 1 (ORTHL) from Arabidopsis thaliana (Mouse-ear cress).